The chain runs to 389 residues: Galactokinase (389 aa).

Glutamate 34–aspartate 37 serves as a coordination point for substrate. ATP is bound by residues serine 68 and glycine 125 to serine 131. Positions 131 and 163 each coordinate Mg(2+). Aspartate 175 functions as the Proton acceptor in the catalytic mechanism. Tyrosine 225 lines the substrate pocket.

Belongs to the GHMP kinase family. GalK subfamily.

The protein localises to the cytoplasm. The enzyme catalyses alpha-D-galactose + ATP = alpha-D-galactose 1-phosphate + ADP + H(+). It participates in carbohydrate metabolism; galactose metabolism. In terms of biological role, catalyzes the transfer of the gamma-phosphate of ATP to D-galactose to form alpha-D-galactose-1-phosphate (Gal-1-P). This Clostridium beijerinckii (strain ATCC 51743 / NCIMB 8052) (Clostridium acetobutylicum) protein is Galactokinase.